The sequence spans 217 residues: Putative 3-methyladenine DNA glycosylase (217 aa).

An RPE2 insert domain is found at 105–145 (SHNNVYTIDTAKIKSQITDEKTQSIIIRKNRRIMKFYIPNL).

Belongs to the DNA glycosylase MPG family.

In Rickettsia prowazekii (strain Madrid E), this protein is Putative 3-methyladenine DNA glycosylase.